A 333-amino-acid chain; its full sequence is Fructose-1,6-bisphosphatase class 1 (333 aa).

Residues Glu-92, Asp-113, Leu-115, and Asp-116 each contribute to the Mg(2+) site. Substrate-binding positions include 116 to 119 (DGSS), Asn-209, Tyr-242, and Lys-272. Residue Glu-278 coordinates Mg(2+).

Belongs to the FBPase class 1 family. Homotetramer. Requires Mg(2+) as cofactor.

The protein localises to the cytoplasm. The catalysed reaction is beta-D-fructose 1,6-bisphosphate + H2O = beta-D-fructose 6-phosphate + phosphate. Its pathway is carbohydrate biosynthesis; Calvin cycle. In Chlorobium luteolum (strain DSM 273 / BCRC 81028 / 2530) (Pelodictyon luteolum), this protein is Fructose-1,6-bisphosphatase class 1.